Consider the following 116-residue polypeptide: Type IV narrow pilus major component PilA5 (116 aa).

Positions Met1–Gly5 are cleaved as a propeptide — leader sequence. Phe6 carries the post-translational modification N-methylphenylalanine. A helical transmembrane segment spans residues Phe6 to Val26.

Glycosylated.

It localises to the cell inner membrane. Its subcellular location is the cell outer membrane. It is found in the periplasm. Its function is as follows. Plays an essential role in forming the main structure of the narrow T4P pili that participates in twitching motility. This Thermus thermophilus (strain ATCC BAA-163 / DSM 7039 / HB27) protein is Type IV narrow pilus major component PilA5 (pilA5).